A 521-amino-acid polypeptide reads, in one-letter code: Medium/long-chain-fatty-acid--[acyl-carrier-protein] ligase MbtM (521 aa).

It belongs to the ATP-dependent AMP-binding enzyme family.

It catalyses the reaction a long-chain fatty acid + holo-[ACP] + ATP = a long-chain fatty acyl-[ACP] + AMP + diphosphate. The catalysed reaction is a medium-chain fatty acid + holo-[ACP] + ATP = a medium-chain fatty acyl-[ACP] + AMP + diphosphate. It participates in siderophore biosynthesis; mycobactin biosynthesis. Activates lipidic moieties required for mycobactin biosynthesis. Converts medium- to long-chain aliphatic fatty acids into acyl adenylate, which is further transferred on to the phosphopantetheine arm of the carrier protein MbtL. This chain is Medium/long-chain-fatty-acid--[acyl-carrier-protein] ligase MbtM (mbtM), found in Mycobacterium bovis (strain ATCC BAA-935 / AF2122/97).